The sequence spans 279 residues: Ribosomal RNA small subunit methyltransferase A (279 aa).

Asn-25, Leu-27, Gly-52, Glu-73, Asp-98, and Asn-120 together coordinate S-adenosyl-L-methionine.

Belongs to the class I-like SAM-binding methyltransferase superfamily. rRNA adenine N(6)-methyltransferase family. RsmA subfamily.

Its subcellular location is the cytoplasm. The catalysed reaction is adenosine(1518)/adenosine(1519) in 16S rRNA + 4 S-adenosyl-L-methionine = N(6)-dimethyladenosine(1518)/N(6)-dimethyladenosine(1519) in 16S rRNA + 4 S-adenosyl-L-homocysteine + 4 H(+). Specifically dimethylates two adjacent adenosines (A1518 and A1519) in the loop of a conserved hairpin near the 3'-end of 16S rRNA in the 30S particle. May play a critical role in biogenesis of 30S subunits. The sequence is that of Ribosomal RNA small subunit methyltransferase A from Magnetococcus marinus (strain ATCC BAA-1437 / JCM 17883 / MC-1).